A 463-amino-acid chain; its full sequence is Endoglucanase EG-1 (463 aa).

A signal peptide spans 1-22; sequence MAPSATLPLTTAILAIGRLVAA. A catalytic region spans residues 23-397; that stretch reads QQPGTSTPEV…DIGSTTNSTG (375 aa). N-linked (GlcNAc...) asparagine glycans are attached at residues Asn-78, Asn-164, Asn-204, and Asn-208. Residue Glu-218 is the Nucleophile of the active site. Glu-223 (proton donor) is an active-site residue. The disordered stretch occupies residues 390 to 429; sequence GSTTNSTGGNPPPPPPPASSTTFSTTRRSSTTSSSPSCTQ. N-linked (GlcNAc...) asparagine glycosylation is present at Asn-394. The linker stretch occupies residues 402–427; it reads PPPPPASSTTFSTTRRSSTTSSSPSC. Positions 408–429 are enriched in low complexity; that stretch reads SSTTFSTTRRSSTTSSSPSCTQ. The CBM1 domain occupies 427 to 463; it reads CTQTHWGQCGGIGYTGCKTCTSGTTCQYGNDYYSQCL. 2 disulfide bridges follow: Cys-435–Cys-452 and Cys-446–Cys-462.

This sequence belongs to the glycosyl hydrolase 7 (cellulase C) family.

It is found in the secreted. It catalyses the reaction Endohydrolysis of (1-&gt;4)-beta-D-glucosidic linkages in cellulose, lichenin and cereal beta-D-glucans.. The biological conversion of cellulose to glucose generally requires three types of hydrolytic enzymes: (1) Endoglucanases which cut internal beta-1,4-glucosidic bonds; (2) Exocellobiohydrolases that cut the disaccharide cellobiose from the non-reducing end of the cellulose polymer chain; (3) Beta-1,4-glucosidases which hydrolyze the cellobiose and other short cello-oligosaccharides to glucose. The protein is Endoglucanase EG-1 (egl1) of Trichoderma longibrachiatum.